A 402-amino-acid polypeptide reads, in one-letter code: Probable 2,3-bisphosphoglycerate-independent phosphoglycerate mutase (402 aa).

The protein belongs to the BPG-independent phosphoglycerate mutase family. A-PGAM subfamily.

The catalysed reaction is (2R)-2-phosphoglycerate = (2R)-3-phosphoglycerate. It functions in the pathway carbohydrate degradation; glycolysis; pyruvate from D-glyceraldehyde 3-phosphate: step 3/5. In terms of biological role, catalyzes the interconversion of 2-phosphoglycerate and 3-phosphoglycerate. The chain is Probable 2,3-bisphosphoglycerate-independent phosphoglycerate mutase from Thermosipho melanesiensis (strain DSM 12029 / CIP 104789 / BI429).